We begin with the raw amino-acid sequence, 38 residues long: Photosystem II reaction center protein Y (38 aa).

Residues 5-23 traverse the membrane as a helical segment; it reads VVVVLAPVIIAGSWAIFNI.

This sequence belongs to the PsbY family. In terms of assembly, PSII is composed of 1 copy each of membrane proteins PsbA, PsbB, PsbC, PsbD, PsbE, PsbF, PsbH, PsbI, PsbJ, PsbK, PsbL, PsbM, PsbT, PsbX, PsbY, PsbZ, Psb30/Ycf12, peripheral proteins PsbO, CyanoQ (PsbQ), PsbU, PsbV and a large number of cofactors. It forms dimeric complexes.

Its subcellular location is the cellular thylakoid membrane. In terms of biological role, loosely associated component of the core of photosystem II (PSII), it is not always seen in crystals. PSII is a light-driven water plastoquinone oxidoreductase, using light energy to abstract electrons from H(2)O, generating a proton gradient subsequently used for ATP formation. This chain is Photosystem II reaction center protein Y, found in Picosynechococcus sp. (strain ATCC 27264 / PCC 7002 / PR-6) (Agmenellum quadruplicatum).